Here is a 508-residue protein sequence, read N- to C-terminus: Lysine--tRNA ligase (508 aa).

Residues glutamate 418 and glutamate 425 each coordinate Mg(2+).

Belongs to the class-II aminoacyl-tRNA synthetase family. As to quaternary structure, homodimer. Requires Mg(2+) as cofactor.

The protein resides in the cytoplasm. The enzyme catalyses tRNA(Lys) + L-lysine + ATP = L-lysyl-tRNA(Lys) + AMP + diphosphate. This chain is Lysine--tRNA ligase, found in Burkholderia vietnamiensis (strain G4 / LMG 22486) (Burkholderia cepacia (strain R1808)).